The following is a 139-amino-acid chain: Class I hydrophobin A (139 aa).

The N-terminal stretch at 1 to 18 (MKFSIAAAVLALASAVVA) is a signal peptide. 4 cysteine pairs are disulfide-bonded: C45-C113, C53-C107, C54-C88, and C114-C133.

It belongs to the fungal hydrophobin family. Self-assembles to form functional amyloid fibrils called rodlets. Self-assembly into fibrillar rodlets occurs spontaneously at hydrophobic:hydrophilic interfaces and the rodlets further associate laterally to form amphipathic monolayers.

It localises to the secreted. It is found in the cell wall. Aerial growth, conidiation, and dispersal of filamentous fungi in the environment rely upon a capability of their secreting small amphipathic proteins called hydrophobins (HPBs) with low sequence identity. Class I can self-assemble into an outermost layer of rodlet bundles on aerial cell surfaces, conferring cellular hydrophobicity that supports fungal growth, development and dispersal; whereas Class II form highly ordered films at water-air interfaces through intermolecular interactions but contribute nothing to the rodlet structure. HYPA is a class I hydrophobin that contributes to surface hydrophobicity, and prevents recognition by the cellular immune defense system. The protein is Class I hydrophobin A of Arthroderma benhamiae (strain ATCC MYA-4681 / CBS 112371) (Trichophyton mentagrophytes).